The chain runs to 116 residues: Large ribosomal subunit protein uL24 (116 aa).

A disordered region spans residues 1–21; that stretch reads MATNNGAGKARHKFHVKKGDT.

This sequence belongs to the universal ribosomal protein uL24 family. As to quaternary structure, part of the 50S ribosomal subunit.

In terms of biological role, one of two assembly initiator proteins, it binds directly to the 5'-end of the 23S rRNA, where it nucleates assembly of the 50S subunit. One of the proteins that surrounds the polypeptide exit tunnel on the outside of the subunit. This Gloeobacter violaceus (strain ATCC 29082 / PCC 7421) protein is Large ribosomal subunit protein uL24.